The sequence spans 240 residues: Pyridoxine 5'-phosphate synthase (240 aa).

N7 provides a ligand contact to 3-amino-2-oxopropyl phosphate. 9-10 (DH) is a 1-deoxy-D-xylulose 5-phosphate binding site. 3-amino-2-oxopropyl phosphate is bound at residue R18. The active-site Proton acceptor is H43. 1-deoxy-D-xylulose 5-phosphate contacts are provided by R45 and H50. Catalysis depends on E70, which acts as the Proton acceptor. T100 lines the 1-deoxy-D-xylulose 5-phosphate pocket. H191 functions as the Proton donor in the catalytic mechanism. 3-amino-2-oxopropyl phosphate-binding positions include G192 and 213-214 (GH).

The protein belongs to the PNP synthase family. In terms of assembly, homooctamer; tetramer of dimers.

It localises to the cytoplasm. It catalyses the reaction 3-amino-2-oxopropyl phosphate + 1-deoxy-D-xylulose 5-phosphate = pyridoxine 5'-phosphate + phosphate + 2 H2O + H(+). The protein operates within cofactor biosynthesis; pyridoxine 5'-phosphate biosynthesis; pyridoxine 5'-phosphate from D-erythrose 4-phosphate: step 5/5. Functionally, catalyzes the complicated ring closure reaction between the two acyclic compounds 1-deoxy-D-xylulose-5-phosphate (DXP) and 3-amino-2-oxopropyl phosphate (1-amino-acetone-3-phosphate or AAP) to form pyridoxine 5'-phosphate (PNP) and inorganic phosphate. This Gloeothece citriformis (strain PCC 7424) (Cyanothece sp. (strain PCC 7424)) protein is Pyridoxine 5'-phosphate synthase.